We begin with the raw amino-acid sequence, 103 residues long: MNTIQVILFAVVLVLTVTVGQADEDSAETSLLRKLEEAEASMFGQYLEESKNSREKRCAVENVPCDKDRPGCCREYECLKPTGYGWWYGSYYCYKKKERLIST.

The N-terminal stretch at 1 to 22 (MNTIQVILFAVVLVLTVTVGQA) is a signal peptide. A propeptide spanning residues 23 to 57 (DEDSAETSLLRKLEEAEASMFGQYLEESKNSREKR) is cleaved from the precursor. Cystine bridges form between Cys58/Cys73, Cys65/Cys78, and Cys72/Cys93.

This sequence belongs to the neurotoxin 14 (magi-1) family. 08 (Ltx-4) subfamily. As to expression, expressed by the venom duct.

The protein localises to the secreted. Its function is as follows. Shows a weak inhibition on the voltage-gated calcium channel Cav2.1/CACNA1A and some voltage-gated sodium channels (with 1 uM toxin tested: 22.08% inhibition on Cav2.1/CACNA1A, 6.6% on Nav1.1/SCN1A, 4.2% on Nav1.5, and 16% on Nav1.7). Functionally, shows a weak inhibition on the voltage-gated calcium channel Cav2.1/CACNA1A (28.06% at 1 uM). The polypeptide is Omega toxin Ap5 (Acanthoscurria paulensis (Brazilian giant black tarantula spider)).